We begin with the raw amino-acid sequence, 205 residues long: Probable GTP-binding protein EngB (205 aa).

The EngB-type G domain occupies 22–196 (NLPEVAFVGR…LKVLDEFIHK (175 aa)). GTP-binding positions include 30-37 (GRSNVGKS), 57-61 (GRTQL), 76-79 (DLPG), 143-146 (TKVD), and 175-177 (FSA). Mg(2+)-binding residues include Ser37 and Thr59.

The protein belongs to the TRAFAC class TrmE-Era-EngA-EngB-Septin-like GTPase superfamily. EngB GTPase family. Mg(2+) is required as a cofactor.

Functionally, necessary for normal cell division and for the maintenance of normal septation. In Desulforamulus reducens (strain ATCC BAA-1160 / DSM 100696 / MI-1) (Desulfotomaculum reducens), this protein is Probable GTP-binding protein EngB.